The chain runs to 675 residues: Protein PALS1 (675 aa).

Disordered regions lie at residues 1 to 32 and 52 to 79; these read MTTSYMNGHVTEESDSGIKNLGLASPEEHPKH and RSAQLERIRQQQEDMRRRREEEGKKQEL. Residues 1–345 are required for the correct localization of PALS1 and PATJ at cell-cell contacts and the normal formation of tight junctions and adherens junctions; it reads MTTSYMNGHV…QQIKPPPAKE (345 aa). Phosphoserine is present on residues Ser14 and Ser25. Residues 21–140 are interaction with PARD6B; it reads LGLASPEEHP…LKHIQHTLVD (120 aa). Basic and acidic residues predominate over residues 54–79; that stretch reads AQLERIRQQQEDMRRRREEEGKKQEL. Phosphoserine is present on residues Ser83 and Ser84. 2 L27 domains span residues 120 to 177 and 179 to 235; these read KILE…NKAS and PFPL…MQLE. The tract at residues 181 to 243 is interaction with LIN7C; it reads PLIANVQDLV…LEPITDERVY (63 aa). The PDZ domain maps to 256-336; sequence IVRIEKARDI…TLTFVLIPSQ (81 aa). The SH3 domain maps to 345–417; it reads ETVIHVKAHF…PGKSFQQQRE (73 aa). The region spanning 479–660 is the Guanylate kinase-like domain; sequence KRPIILIGPQ…AYQELLRLIN (182 aa). 486-493 lines the ATP pocket; that stretch reads GPQNCGQN.

Belongs to the MAGUK family. As to quaternary structure, heterodimer with MPP1. Forms a heterotrimeric complex composed of PALS1, LIN7B and PATJ; the N-terminal L27 domain of PALS1 interacts with the L27 domain of PATJ and the C-terminal L27 domain of PALS1 interacts with the L27 domain of LIN7B. Component of a complex composed of PALS1, CRB1 and MPP4. Component of a complex whose core is composed of ARHGAP17, AMOT, PALS1, PATJ and PARD3/PAR3. Component of a complex composed of PALS1, CRB1 and EPB41L5. Within the complex, interacts (via HOOK domain) with EPB41L5 (via FERM domain), and interacts with CRB1 (via intracellular domain). Component of a complex composed of PALS1, MPP3 and CRB1; PALS1 acts as a bridging protein between MPP3 (via guanylate kinase-like domain) and CRB1. Component of a complex composed of CRB3, PALS1 and PATJ. As part of the Crumbs complex; interacts with WWP1, the interaction is enhanced by AMOTL2 and facilitates WWP1 localization to the plasma membrane. The Crumbs complex promotes monoubiquitination of AMOTL2 by WWP1, which activates the Hippo signaling pathway. Interacts (via PDZ domain) with PATJ (via N-terminus). Interacts with EZR. Interacts (via PDZ domain) with CRB1 (via C-terminal ERLI motif). While the PDZ domain is sufficient for interaction with CRB1, the adjacent SH3 and guanylate kinase-like domains are likely to contribute to a high affinity interaction. Interacts with WWTR1/TAZ (via WW domain). Interacts with MPP7. Interacts (via PDZ domain) with CRB3 (via C-terminus). Interacts with LIN7C. Interacts with MPDZ. Interacts with PARD6B. Interacts with SC6A1. Interacts with CDH5; the interaction promotes PALS1 localization to cell junctions and is required for CDH5-mediated vascular lumen formation and endothelial cell. Interacts with NPHP1 (via coiled coil and SH3 domains). Interacts with NPHP4. Interacts with CRB2.

It is found in the golgi apparatus. The protein localises to the cell membrane. Its subcellular location is the endomembrane system. It localises to the cell junction. The protein resides in the tight junction. It is found in the adherens junction. The protein localises to the cell projection. Its subcellular location is the axon. It localises to the perikaryon. The protein resides in the apical cell membrane. Its function is as follows. Plays a role in tight junction biogenesis and in the establishment of cell polarity in epithelial cells. Also involved in adherens junction biogenesis by ensuring correct localization of the exocyst complex protein EXOC4/SEC8 which allows trafficking of adherens junction structural component CDH1 to the cell surface. Plays a role through its interaction with CDH5 in vascular lumen formation and endothelial membrane polarity. Required during embryonic and postnatal retinal development. Required for the maintenance of cerebellar progenitor cells in an undifferentiated proliferative state, preventing premature differentiation, and is required for cerebellar histogenesis, fissure formation, cerebellar layer organization and cortical development. Plays a role in neuronal progenitor cell survival, potentially via promotion of mTOR signaling. Plays a role in the radial and longitudinal extension of the myelin sheath in Schwann cells. May modulate SC6A1/GAT1-mediated GABA uptake by stabilizing the transporter. May play a role in the T-cell receptor-mediated activation of NF-kappa-B. Required for localization of EZR to the apical membrane of parietal cells and may play a role in the dynamic remodeling of the apical cytoskeleton. Required for the normal polarized localization of the vesicular marker STX4. Required for the correct trafficking of the myelin proteins PMP22 and MAG. Involved in promoting phosphorylation and cytoplasmic retention of transcriptional coactivators YAP1 and WWTR1/TAZ which leads to suppression of TGFB1-dependent transcription of target genes such as CCN2/CTGF, SERPINE1/PAI1, SNAI1/SNAIL1 and SMAD7. The sequence is that of Protein PALS1 from Rattus norvegicus (Rat).